Consider the following 410-residue polypeptide: Protein king tubby 2 (410 aa).

Positions 48-72 (SPNNPDQILTSTGNASITTTPTSPY) are enriched in polar residues. Disordered regions lie at residues 48–109 (SPNN…STRH) and 121–159 (ISPA…EGDV). Positions 132–143 (SHHDSSSGKSVE) are enriched in basic and acidic residues.

It belongs to the TUB family.

It localises to the cytoplasm. The protein localises to the nucleus. This chain is Protein king tubby 2 (king-tubby2), found in Aedes aegypti (Yellowfever mosquito).